A 170-amino-acid chain; its full sequence is Cathelicidin antimicrobial peptide (170 aa).

The N-terminal stretch at M1–A30 is a signal peptide. A propeptide spans Q31–R131 (cathelin-like domain (CLD)). Disulfide bonds link C86–C97 and C108–C125. An active core region spans residues L150–G162.

Belongs to the cathelicidin family. Monomer, homodimer or homotrimer (in vitro). Oligomerizes as tetra- or hexamer in solution (in vitro). Proteolytically cleaved by proteinase PRTN3 into antibacterial peptide LL-37. Proteolytically cleaved by cathepsin CTSG and neutrophil elastase ELANE. In terms of processing, resistant to proteolytic degradation in solution, and when bound to both zwitterionic (mimicking mammalian membranes) and negatively charged membranes (mimicking bacterial membranes). Post-translationally, after secretion onto the skin surface, the CAMP gene product is processed by a serine protease-dependent mechanism into multiple novel antimicrobial peptides distinct from and shorter than cathelicidin LL-37. These peptides show enhanced antimicrobial action, acquiring the ability to kill skin pathogens such as S.aureus, E.coli and C.albicans. These peptides have lost the ability to stimulate CXCL8/IL8 release from keratinocytes. The peptides act synergistically, killing bacteria at lower concentrations when present together, and maintain activity at increased salt condition.

It localises to the secreted. The protein resides in the vesicle. Its function is as follows. Antimicrobial protein that is an integral component of the innate immune system. Binds to bacterial lipopolysaccharides (LPS). Acts via neutrophil N-formyl peptide receptors to enhance the release of CXCL2. Postsecretory processing generates multiple cathelicidin antimicrobial peptides with various lengths which act as a topical antimicrobial defense in sweat on skin. The unprocessed precursor form, cathelicidin antimicrobial peptide, inhibits the growth of Gram-negative E.coli and E.aerogenes with efficiencies comparable to that of the mature peptide LL-37 (in vitro). In terms of biological role, antimicrobial peptide that is an integral component of the innate immune system. Binds to bacterial lipopolysaccharides (LPS). Causes membrane permeabilization by forming transmembrane pores (in vitro). Causes lysis of E.coli. Exhibits antimicrobial activity against Gram-negative bacteria such as P.aeruginosa, S.typhimurium, E.aerogenes, E.coli and P.syringae, Gram-positive bacteria such as L.monocytogenes, S.epidermidis, S.pyogenes and S.aureus, as well as vancomycin-resistant enterococci (in vitro). Exhibits antimicrobial activity against methicillin-resistant S.aureus, P.mirabilis, and C.albicans in low-salt media, but not in media containing 100 mM NaCl (in vitro). Forms chiral supramolecular assemblies with quinolone signal (PQS) molecules of P.aeruginosa, which may lead to interference of bacterial quorum signaling and perturbance of bacterial biofilm formation. May form supramolecular fiber-like assemblies on bacterial membranes. Induces cytokine and chemokine producation as well as TNF/TNFA and CSF2/GMCSF production in normal human keratinocytes. Exhibits hemolytic activity against red blood cells. Exhibits antimicrobial activity against E.coli and B.megaterium (in vitro). The polypeptide is Cathelicidin antimicrobial peptide (Trachypithecus cristatus (Silvered leaf-monkey)).